The primary structure comprises 122 residues: Large ribosomal subunit protein uL14 (122 aa).

Belongs to the universal ribosomal protein uL14 family. As to quaternary structure, part of the 50S ribosomal subunit. Forms a cluster with proteins L3 and L19. In the 70S ribosome, L14 and L19 interact and together make contacts with the 16S rRNA in bridges B5 and B8.

Binds to 23S rRNA. Forms part of two intersubunit bridges in the 70S ribosome. This Borrelia turicatae (strain 91E135) protein is Large ribosomal subunit protein uL14.